The chain runs to 371 residues: Queuine tRNA-ribosyltransferase (371 aa).

Catalysis depends on D89, which acts as the Proton acceptor. Substrate is bound by residues 89 to 93, D143, Q185, and G212; that span reads DSGGF. The tract at residues 243–249 is RNA binding; the sequence is GVGKPED. D262 acts as the Nucleophile in catalysis. Positions 267–271 are RNA binding; important for wobble base 34 recognition; the sequence is TRNAR. 4 residues coordinate Zn(2+): C300, C302, C305, and H331.

The protein belongs to the queuine tRNA-ribosyltransferase family. As to quaternary structure, homodimer. Within each dimer, one monomer is responsible for RNA recognition and catalysis, while the other monomer binds to the replacement base PreQ1. Zn(2+) is required as a cofactor.

It catalyses the reaction 7-aminomethyl-7-carbaguanine + guanosine(34) in tRNA = 7-aminomethyl-7-carbaguanosine(34) in tRNA + guanine. Its pathway is tRNA modification; tRNA-queuosine biosynthesis. Functionally, catalyzes the base-exchange of a guanine (G) residue with the queuine precursor 7-aminomethyl-7-deazaguanine (PreQ1) at position 34 (anticodon wobble position) in tRNAs with GU(N) anticodons (tRNA-Asp, -Asn, -His and -Tyr). Catalysis occurs through a double-displacement mechanism. The nucleophile active site attacks the C1' of nucleotide 34 to detach the guanine base from the RNA, forming a covalent enzyme-RNA intermediate. The proton acceptor active site deprotonates the incoming PreQ1, allowing a nucleophilic attack on the C1' of the ribose to form the product. After dissociation, two additional enzymatic reactions on the tRNA convert PreQ1 to queuine (Q), resulting in the hypermodified nucleoside queuosine (7-(((4,5-cis-dihydroxy-2-cyclopenten-1-yl)amino)methyl)-7-deazaguanosine). The polypeptide is Queuine tRNA-ribosyltransferase (Azotobacter vinelandii (strain DJ / ATCC BAA-1303)).